The sequence spans 197 residues: Peptidyl-tRNA hydrolase (197 aa).

Tyrosine 23 is a tRNA binding site. Histidine 28 serves as the catalytic Proton acceptor. The tRNA site is built by phenylalanine 73, asparagine 75, and asparagine 121.

It belongs to the PTH family. As to quaternary structure, monomer.

It is found in the cytoplasm. It carries out the reaction an N-acyl-L-alpha-aminoacyl-tRNA + H2O = an N-acyl-L-amino acid + a tRNA + H(+). In terms of biological role, hydrolyzes ribosome-free peptidyl-tRNAs (with 1 or more amino acids incorporated), which drop off the ribosome during protein synthesis, or as a result of ribosome stalling. Catalyzes the release of premature peptidyl moieties from peptidyl-tRNA molecules trapped in stalled 50S ribosomal subunits, and thus maintains levels of free tRNAs and 50S ribosomes. In Frankia alni (strain DSM 45986 / CECT 9034 / ACN14a), this protein is Peptidyl-tRNA hydrolase.